The following is a 486-amino-acid chain: Endoglucanase 16 (486 aa).

Positions 1 to 30 (MANYKGRGNVMIRSMLLGLYGIINIVCVNG) are cleaved as a signal peptide. Asn-29 is a glycosylation site (N-linked (GlcNAc...) asparagine). Asp-87 functions as the Nucleophile in the catalytic mechanism. Catalysis depends on residues His-407, Asp-458, and Glu-467.

This sequence belongs to the glycosyl hydrolase 9 (cellulase E) family.

It is found in the secreted. The enzyme catalyses Endohydrolysis of (1-&gt;4)-beta-D-glucosidic linkages in cellulose, lichenin and cereal beta-D-glucans.. This Arabidopsis thaliana (Mouse-ear cress) protein is Endoglucanase 16.